The chain runs to 138 residues: Cysteine desulfuration protein SufE (138 aa).

The active-site Cysteine persulfide intermediate is the cysteine 51.

The protein belongs to the SufE family. As to quaternary structure, homodimer. Interacts with SufS.

The protein localises to the cytoplasm. It participates in cofactor biosynthesis; iron-sulfur cluster biosynthesis. Participates in cysteine desulfuration mediated by SufS. Cysteine desulfuration mobilizes sulfur from L-cysteine to yield L-alanine and constitutes an essential step in sulfur metabolism for biosynthesis of a variety of sulfur-containing biomolecules. Functions as a sulfur acceptor for SufS, by mediating the direct transfer of the sulfur atom from the S-sulfanylcysteine of SufS, an intermediate product of cysteine desulfuration process. This chain is Cysteine desulfuration protein SufE, found in Cronobacter sakazakii (strain ATCC BAA-894) (Enterobacter sakazakii).